The sequence spans 83 residues: Beta/kappa-theraphotoxin-Cg2a (83 aa).

A signal peptide spans 1–21 (MKASVFAVILGLVVLCACSFA). A propeptide spanning residues 22-53 (EDEQDQFVSPNELLKSMFVESRHEFTPEVEGR) is cleaved from the precursor. 3 disulfides stabilise this stretch: Cys55–Cys69, Cys62–Cys74, and Cys68–Cys78. Position 82 is an isoleucine amide (Ile82).

It belongs to the neurotoxin 30 (phrixotoxin) family. Expressed by the venom gland.

It localises to the secreted. This gating-modifier toxin shows an important inhibitory activity on sodium channels. It is very active on Nav1.7/SCN9A (IC(50)~0.6 nM), and also shows activity on Nav1.3/SCN3A (IC(50)=292 nM), Nav1.4/SCN4A (IC(50)=2.2-159 nM), and Nav1.5/SCN5A (IC(50)=2.3-2.9 uM). It has also been shown to inhibit tetrodotoxin (TTX)-resistant (IC(50)=27.6 nM) and TTX-sensitive (IC(50)=30.2 nM) sodium channels in rat dorsal root ganglion neurons. Lower inhibitory activity has also been shown on potassium channels: Kv4.2/KCND2 (IC(50)=604.2 nM), Kv4.3/KCND3 (IC(50)=425.1 nM), and Kv2.1/KCNB1 (IC(50)=14.3 uM). It binds to phospholipid membranes. Like its analog AM-8145, it may act by interacting only with the second voltage-sensor domain of Nav1.7/SCN9A. This Chilobrachys guangxiensis (Chinese earth tiger tarantula) protein is Beta/kappa-theraphotoxin-Cg2a.